Here is a 238-residue protein sequence, read N- to C-terminus: Pyridoxine 5'-phosphate synthase (238 aa).

3-amino-2-oxopropyl phosphate-binding residues include Asn-7 and Arg-18. His-43 acts as the Proton acceptor in catalysis. 1-deoxy-D-xylulose 5-phosphate-binding residues include Arg-45 and His-50. The active-site Proton acceptor is the Glu-70. Thr-100 provides a ligand contact to 1-deoxy-D-xylulose 5-phosphate. His-190 serves as the catalytic Proton donor. Residues Asp-191 and 213–214 (GH) each bind 3-amino-2-oxopropyl phosphate.

Belongs to the PNP synthase family. Homooctamer; tetramer of dimers.

Its subcellular location is the cytoplasm. The catalysed reaction is 3-amino-2-oxopropyl phosphate + 1-deoxy-D-xylulose 5-phosphate = pyridoxine 5'-phosphate + phosphate + 2 H2O + H(+). It participates in cofactor biosynthesis; pyridoxine 5'-phosphate biosynthesis; pyridoxine 5'-phosphate from D-erythrose 4-phosphate: step 5/5. Functionally, catalyzes the complicated ring closure reaction between the two acyclic compounds 1-deoxy-D-xylulose-5-phosphate (DXP) and 3-amino-2-oxopropyl phosphate (1-amino-acetone-3-phosphate or AAP) to form pyridoxine 5'-phosphate (PNP) and inorganic phosphate. In Cytophaga hutchinsonii (strain ATCC 33406 / DSM 1761 / CIP 103989 / NBRC 15051 / NCIMB 9469 / D465), this protein is Pyridoxine 5'-phosphate synthase.